Reading from the N-terminus, the 595-residue chain is NADH-quinone oxidoreductase subunit C/D (595 aa).

An NADH dehydrogenase I subunit C region spans residues 1–185 (MTDLTAQAAC…DPFELTKAKQ (185 aa)). The segment at 209 to 595 (DFMFLNLGPN…IDFVMSDVDR (387 aa)) is NADH dehydrogenase I subunit D.

In the N-terminal section; belongs to the complex I 30 kDa subunit family. The protein in the C-terminal section; belongs to the complex I 49 kDa subunit family. As to quaternary structure, NDH-1 is composed of 13 different subunits. Subunits NuoB, CD, E, F, and G constitute the peripheral sector of the complex.

The protein resides in the cell inner membrane. It carries out the reaction a quinone + NADH + 5 H(+)(in) = a quinol + NAD(+) + 4 H(+)(out). Functionally, NDH-1 shuttles electrons from NADH, via FMN and iron-sulfur (Fe-S) centers, to quinones in the respiratory chain. The immediate electron acceptor for the enzyme in this species is believed to be ubiquinone. Couples the redox reaction to proton translocation (for every two electrons transferred, four hydrogen ions are translocated across the cytoplasmic membrane), and thus conserves the redox energy in a proton gradient. The sequence is that of NADH-quinone oxidoreductase subunit C/D from Enterobacter sp. (strain 638).